Here is a 465-residue protein sequence, read N- to C-terminus: Pancreatic triacylglycerol lipase (465 aa).

The first 16 residues, 1–16 (MLPLWTLSLLLGAVAG), serve as a signal peptide directing secretion. Disulfide bonds link Cys20-Cys26 and Cys107-Cys118. The Nucleophile role is filled by Ser169. Asn183 carries an N-linked (GlcNAc...) asparagine glycan. The active-site Charge relay system is Asp193. The Ca(2+) site is built by Glu204, Arg207, Asp209, and Asp212. Cys254 and Cys278 are joined by a disulfide. His280 serves as the catalytic Charge relay system. Intrachain disulfides connect Cys302–Cys313, Cys316–Cys321, and Cys449–Cys465. A PLAT domain is found at 355–465 (WRYKVSVTLS…EEVLLTLTPC (111 aa)).

This sequence belongs to the AB hydrolase superfamily. Lipase family. In terms of assembly, forms a 1:1 stoichiometric complex with (pro)colipase/CLPS.

The protein resides in the secreted. The catalysed reaction is a triacylglycerol + H2O = a diacylglycerol + a fatty acid + H(+). It catalyses the reaction 1,2,3-tributanoylglycerol + H2O = dibutanoylglycerol + butanoate + H(+). The enzyme catalyses 1,2,3-tri-(9Z-octadecenoyl)-glycerol + H2O = di-(9Z)-octadecenoylglycerol + (9Z)-octadecenoate + H(+). It carries out the reaction all-trans-retinyl hexadecanoate + H2O = all-trans-retinol + hexadecanoate + H(+). The catalysed reaction is 1,2-di-(9Z-octadecenoyl)-glycerol + H2O = (9Z-octadecenoyl)-glycerol + (9Z)-octadecenoate + H(+). With respect to regulation, inhibited by bile salts, is reactivated by (pro)colipase/CLPS. Its function is as follows. Plays an important role in fat metabolism. It preferentially splits the esters of long-chain fatty acids at positions 1 and 3, producing mainly 2-monoacylglycerol and free fatty acids, and shows considerably higher activity against insoluble emulsified substrates than against soluble ones. This is Pancreatic triacylglycerol lipase from Homo sapiens (Human).